Consider the following 127-residue polypeptide: Small ribosomal subunit protein eS8 (127 aa).

Positions 1-25 (MTIFQGKSGKKPTGGNLKQAKKKRR) are disordered.

It belongs to the eukaryotic ribosomal protein eS8 family. Part of the 30S ribosomal subunit.

The sequence is that of Small ribosomal subunit protein eS8 from Thermoplasma volcanium (strain ATCC 51530 / DSM 4299 / JCM 9571 / NBRC 15438 / GSS1).